The following is a 251-amino-acid chain: Hydroxyacylglutathione hydrolase (251 aa).

Zn(2+) contacts are provided by His55, His57, Asp59, His60, His112, Asp131, and His169.

It belongs to the metallo-beta-lactamase superfamily. Glyoxalase II family. Monomer. Zn(2+) is required as a cofactor.

It catalyses the reaction an S-(2-hydroxyacyl)glutathione + H2O = a 2-hydroxy carboxylate + glutathione + H(+). It participates in secondary metabolite metabolism; methylglyoxal degradation; (R)-lactate from methylglyoxal: step 2/2. Functionally, thiolesterase that catalyzes the hydrolysis of S-D-lactoyl-glutathione to form glutathione and D-lactic acid. The chain is Hydroxyacylglutathione hydrolase from Erythrobacter litoralis (strain HTCC2594).